Reading from the N-terminus, the 328-residue chain is Malate dehydrogenase (328 aa).

11-17 (GAAGQIG) provides a ligand contact to NAD(+). Substrate contacts are provided by Arg-94 and Arg-100. Residues Asn-107, Gln-114, and 131–133 (VGN) each bind NAD(+). Substrate-binding residues include Asn-133 and Arg-164. His-189 functions as the Proton acceptor in the catalytic mechanism.

It belongs to the LDH/MDH superfamily. MDH type 2 family.

The catalysed reaction is (S)-malate + NAD(+) = oxaloacetate + NADH + H(+). Functionally, catalyzes the reversible oxidation of malate to oxaloacetate. In Xanthomonas campestris pv. campestris (strain B100), this protein is Malate dehydrogenase.